The following is a 400-amino-acid chain: Axin-like protein 1 (400 aa).

The 129-residue stretch at 4 to 132 folds into the RGS domain; that stretch reads RSKFSIDRVL…TTTADVNTTW (129 aa). Disordered regions lie at residues 190–233 and 278–306; these read QETK…TLKV and GTLERPNRLFTGTNNGFSTLQPKRRGSEA. Positions 194-210 are enriched in basic and acidic residues; that stretch reads NSSETEEHAESPRKEKS. The span at 287-298 shows a compositional bias: polar residues; the sequence is FTGTNNGFSTLQ. Positions 305–392 constitute a DIX domain; the sequence is EAPKMTVELR…RITAICRMCP (88 aa).

As to quaternary structure, interacts with bar-1, dsh-2, gsk-3, and mig-5.

In terms of biological role, works in parallel with pry-1 in negatively regulating bar-1 signaling in vulval precursor cells and Q neuroblasts. Shown to have a role in excretory cell development. In Caenorhabditis elegans, this protein is Axin-like protein 1.